We begin with the raw amino-acid sequence, 88 residues long: Small ribosomal subunit protein bS20 (88 aa).

The span at 1–10 (MANHKSSLKR) shows a compositional bias: basic residues. The disordered stretch occupies residues 1-24 (MANHKSSLKRAKQDIVRNTRNKSR).

It belongs to the bacterial ribosomal protein bS20 family.

In terms of biological role, binds directly to 16S ribosomal RNA. The protein is Small ribosomal subunit protein bS20 of Desulfosudis oleivorans (strain DSM 6200 / JCM 39069 / Hxd3) (Desulfococcus oleovorans).